The sequence spans 320 residues: Ribose-phosphate pyrophosphokinase (320 aa).

ATP is bound by residues 43 to 45 and 102 to 103; these read DGE and RQ. Mg(2+) contacts are provided by His-136 and Asp-178. Lys-201 is an active-site residue. Residues Arg-203, Asp-227, and 231–235 each bind D-ribose 5-phosphate; that span reads DTAGT.

Belongs to the ribose-phosphate pyrophosphokinase family. Class I subfamily. In terms of assembly, homohexamer. The cofactor is Mg(2+).

It localises to the cytoplasm. It carries out the reaction D-ribose 5-phosphate + ATP = 5-phospho-alpha-D-ribose 1-diphosphate + AMP + H(+). Its pathway is metabolic intermediate biosynthesis; 5-phospho-alpha-D-ribose 1-diphosphate biosynthesis; 5-phospho-alpha-D-ribose 1-diphosphate from D-ribose 5-phosphate (route I): step 1/1. In terms of biological role, involved in the biosynthesis of the central metabolite phospho-alpha-D-ribosyl-1-pyrophosphate (PRPP) via the transfer of pyrophosphoryl group from ATP to 1-hydroxyl of ribose-5-phosphate (Rib-5-P). The sequence is that of Ribose-phosphate pyrophosphokinase from Clostridium tetani (strain Massachusetts / E88).